The primary structure comprises 1129 residues: Serine/threonine-protein kinase LATS1 (1129 aa).

Residues 1 to 11 (MKRGEKPEGYR) show a composition bias toward basic and acidic residues. The disordered stretch occupies residues 1 to 71 (MKRGEKPEGY…PRQVRNPPKF (71 aa)). The span at 19–30 (PASNYPGSSRQM) shows a compositional bias: polar residues. The span at 46 to 64 (DASKAEHNLNKMSTEDPRQ) shows a compositional bias: basic and acidic residues. The 42-residue stretch at 100-141 (EVNPQMFQDLQAAGFDEDMVIQALQKTNNRSIEAAVEFISKM) folds into the UBA domain. Disordered stretches follow at residues 148-216 (REQM…RPLS) and 228-276 (PSNG…QTKR). A compositionally biased stretch (pro residues) spans 235–268 (NPPPPPQVRSVTPPPPPRGQTPPPRGTTPPPPSW). Thr-246 carries the post-translational modification Phosphothreonine. The residue at position 278 (Ser-278) is a Phosphoserine. Disordered stretches follow at residues 292–317 (PPGA…SQAQ), 363–407 (PTGS…VPQS), 432–492 (WPQS…TPAP), and 513–630 (PTHP…ESRI). The span at 300–312 (YPPPPLTTSPMNP) shows a compositional bias: pro residues. The short motif at 372 to 375 (PPPY) is the PPxY motif 1 element. The span at 380-392 (ANGQSPSALQTGA) shows a compositional bias: polar residues. The span at 433–445 (PQSSSAPAQSSPS) shows a compositional bias: low complexity. The segment covering 453–481 (WQPNIPVRSNSFNNPLGSRASHSANSQPS) has biased composition (polar residues). At Ser-463 the chain carries Phosphoserine; by NUAK1 and NUAK2. 2 stretches are compositionally biased toward low complexity: residues 482-492 (ATTVTAITPAP) and 520-530 (PQPVQTVQPTP). An interaction with YAP1 region spans residues 525 to 654 (TVQPTPFSEG…HVENVLKSHQ (130 aa)). The PPxY motif 2 motif lies at 555 to 558 (PPPY). The segment covering 578-608 (PCKDEQPSLPKEDDSEKSADSGDSGDKEKKQ) has biased composition (basic and acidic residues). The residue at position 612 (Ser-612) is a Phosphoserine. The span at 620 to 629 (KKDEERRESR) shows a compositional bias: basic and acidic residues. Ser-673 carries the phosphoserine modification. Positions 704–1009 (FVKIKTLGIG…ADEIKAHPFF (306 aa)) constitute a Protein kinase domain. ATP contacts are provided by residues 710-718 (LGIGAFGEV) and Lys-733. The Proton acceptor role is filled by Asp-827. The residue at position 908 (Ser-908) is a Phosphoserine; by STK3/MST2. In terms of domain architecture, AGC-kinase C-terminal spans 1010-1089 (KTIDFSSDLR…RRFFDDNGYP (80 aa)). Thr-1078 carries the post-translational modification Phosphothreonine; by STK3/MST2. Residues 1104-1129 (QGSEQQSDEDDQHTSSDGNNRDLVYV) are disordered.

The protein belongs to the protein kinase superfamily. AGC Ser/Thr protein kinase family. Complexes with CDK1 in early mitosis. LATS1-associated CDK1 has no mitotic cyclin partner and no apparent kinase activity. Binds phosphorylated ZYX, locating this protein to the mitotic spindle and suggesting a role for actin regulatory proteins during mitosis. Binds to and colocalizes with LIMK1 at the actomyosin contractile ring during cytokinesis. Interacts (via PPxY motif 2) with YAP1 (via WW domains). Interacts with MOB1A and MOB1B. Interacts with LIMD1, WTIP and AJUBA. Interacts with ESR1, DCAF1 and DCAF13; probably recruits DCAF1 and DCAF13 to ESR1 to promote ESR1 ubiquitination and ubiquitin-mediated proteasomal degradation. Interacts with STK3/MST2; this interaction is inhibited in the presence of DLG5. Interacts with SCRIB in the presence of DLG5. Interacts with WWTR1/TAZ. Interacts with WWC1, WWC2 and WWC3 (via their WW domains). Mg(2+) is required as a cofactor. Autophosphorylated and phosphorylated during M-phase of the cell cycle. Phosphorylated by STK3/MST2 at Ser-908 and Thr-1078, which results in its activation. Phosphorylated by MAP4Ks; in parallel to STK3/MST2 and resulting to its activation. Phosphorylation at Ser-463 by NUAK1 and NUAK2 leads to decreased protein level and is required to regulate cellular senescence and cellular ploidy.

It localises to the cytoplasm. The protein resides in the cytoskeleton. Its subcellular location is the microtubule organizing center. It is found in the centrosome. The protein localises to the spindle. It localises to the midbody. The protein resides in the spindle pole body. The enzyme catalyses L-seryl-[protein] + ATP = O-phospho-L-seryl-[protein] + ADP + H(+). It catalyses the reaction L-threonyl-[protein] + ATP = O-phospho-L-threonyl-[protein] + ADP + H(+). In terms of biological role, negative regulator of YAP1 in the Hippo signaling pathway that plays a pivotal role in organ size control and tumor suppression by restricting proliferation and promoting apoptosis. The core of this pathway is composed of a kinase cascade wherein STK3/MST2 and STK4/MST1, in complex with its regulatory protein SAV1, phosphorylates and activates LATS1/2 in complex with its regulatory protein MOB1, which in turn phosphorylates and inactivates YAP1 oncoprotein and WWTR1/TAZ. Phosphorylation of YAP1 by LATS1 inhibits its translocation into the nucleus to regulate cellular genes important for cell proliferation, cell death, and cell migration. Acts as a tumor suppressor which plays a critical role in maintenance of ploidy through its actions in both mitotic progression and the G1 tetraploidy checkpoint. Negatively regulates G2/M transition by down-regulating CDK1 kinase activity. Involved in the control of p53 expression. Affects cytokinesis by regulating actin polymerization through negative modulation of LIMK1. May also play a role in endocrine function. Plays a role in mammary gland epithelial cell differentiation, both through the Hippo signaling pathway and the intracellular estrogen receptor signaling pathway by promoting the degradation of ESR1. Acts as an activator of the NLRP3 inflammasome by mediating phosphorylation of 'Ser-265' of NLRP3 following NLRP3 palmitoylation, promoting NLRP3 activation by NEK7. This Mus musculus (Mouse) protein is Serine/threonine-protein kinase LATS1.